The chain runs to 450 residues: Chromosomal replication initiator protein DnaA 2 (450 aa).

Residues 1–87 (MLTCNECTTW…LEFVVAEHKK (87 aa)) are domain I, interacts with DnaA modulators. Positions 87–114 (KPSAPVASQKESNEGISEVFEETKDFEL) are domain II. Positions 115–330 (KLNLSYRFDN…GAINKLTAYC (216 aa)) are domain III, AAA+ region. ATP-binding residues include Gly-159, Gly-161, Lys-162, and Thr-163. The interval 331–450 (RLFGKSLTET…VNLCKNHIVG (120 aa)) is domain IV, binds dsDNA.

Belongs to the DnaA family. Oligomerizes as a right-handed, spiral filament on DNA at oriC.

The protein resides in the cytoplasm. In terms of biological role, plays an essential role in the initiation and regulation of chromosomal replication. ATP-DnaA binds to the origin of replication (oriC) to initiate formation of the DNA replication initiation complex once per cell cycle. Binds the DnaA box (a 9 base pair repeat at the origin) and separates the double-stranded (ds)DNA. Forms a right-handed helical filament on oriC DNA; dsDNA binds to the exterior of the filament while single-stranded (ss)DNA is stabiized in the filament's interior. The ATP-DnaA-oriC complex binds and stabilizes one strand of the AT-rich DNA unwinding element (DUE), permitting loading of DNA polymerase. After initiation quickly degrades to an ADP-DnaA complex that is not apt for DNA replication. Binds acidic phospholipids. In Chlamydia pneumoniae (Chlamydophila pneumoniae), this protein is Chromosomal replication initiator protein DnaA 2.